The primary structure comprises 99 residues: uncharacterized protein (99 aa).

A disordered region spans residues 1-99 (MSDFPPSYQQ…KYHSKSDVGF (99 aa)). Polar residues predominate over residues 19–29 (QESSTSNNASE).

This is an uncharacterized protein from Schizosaccharomyces pombe (strain 972 / ATCC 24843) (Fission yeast).